The primary structure comprises 197 residues: Pinin homolog 1 (197 aa).

The tract at residues 30–73 is disordered; it reads LDGKVNNEDSHMEIDQPEGSMEEDDHRQVKEKNTSENSVEQKRG. Composition is skewed to basic and acidic residues over residues 34-43 and 53-71; these read VNNEDSHMEI and DDHRQVKEKNTSENSVEQK.

Belongs to the pinin family.

It localises to the nucleus. The protein resides in the cytoplasm. Transcriptional activator that may participate in the regulation of mRNA splicing. The polypeptide is Pinin homolog 1 (pnn1) (Schizosaccharomyces pombe (strain 972 / ATCC 24843) (Fission yeast)).